The sequence spans 278 residues: Imidazole glycerol phosphate synthase subunit HisF (278 aa).

Catalysis depends on residues Asp-11 and Asp-130.

Belongs to the HisA/HisF family. As to quaternary structure, heterodimer of HisH and HisF.

It is found in the cytoplasm. The enzyme catalyses 5-[(5-phospho-1-deoxy-D-ribulos-1-ylimino)methylamino]-1-(5-phospho-beta-D-ribosyl)imidazole-4-carboxamide + L-glutamine = D-erythro-1-(imidazol-4-yl)glycerol 3-phosphate + 5-amino-1-(5-phospho-beta-D-ribosyl)imidazole-4-carboxamide + L-glutamate + H(+). It functions in the pathway amino-acid biosynthesis; L-histidine biosynthesis; L-histidine from 5-phospho-alpha-D-ribose 1-diphosphate: step 5/9. Functionally, IGPS catalyzes the conversion of PRFAR and glutamine to IGP, AICAR and glutamate. The HisF subunit catalyzes the cyclization activity that produces IGP and AICAR from PRFAR using the ammonia provided by the HisH subunit. The chain is Imidazole glycerol phosphate synthase subunit HisF from Thermodesulfovibrio yellowstonii (strain ATCC 51303 / DSM 11347 / YP87).